A 101-amino-acid chain; its full sequence is Ascorbate-specific PTS system EIIB component (101 aa).

The PTS EIIB type-2 domain maps to 3-96 (VRILAVCGNG…KLLEVIKAHF (94 aa)). Catalysis depends on Cys9, which acts as the Phosphocysteine intermediate. A Phosphocysteine modification is found at Cys9.

The protein resides in the cytoplasm. The catalysed reaction is N(pros)-phospho-L-histidyl-[protein] + L-ascorbate(out) = L-ascorbate 6-phosphate(in) + L-histidyl-[protein]. Functionally, the phosphoenolpyruvate-dependent sugar phosphotransferase system (sugar PTS), a major carbohydrate active transport system, catalyzes the phosphorylation of incoming sugar substrates concomitantly with their translocation across the cell membrane. The enzyme II UlaABC PTS system is involved in ascorbate transport. This is Ascorbate-specific PTS system EIIB component (ulaB) from Escherichia coli O6:H1 (strain CFT073 / ATCC 700928 / UPEC).